We begin with the raw amino-acid sequence, 875 residues long: Acetyl-coenzyme A carboxylase carboxyl transferase subunit alpha, chloroplastic (875 aa).

Residues 1–50 constitute a chloroplast transit peptide; it reads MASSSATLVGSTASDLLRSSTTGFTGVPLRTLGRAGLVLKRRDLTVSVTA. Residues 128–380 form the CoA carboxyltransferase C-terminal domain; the sequence is EAKYQKALVE…KIAINEAMDE (253 aa). Residues 664–705 adopt a coiled-coil conformation; that stretch reads LLLDKNKAATRKQELKKKSDEHKEAARLEQELKKKFDEVMDT. A disordered region spans residues 845–875; it reads KEKYENLTRPAGDTLTDDKLREKVGVNRNFS. Basic and acidic residues predominate over residues 860–869; the sequence is TDDKLREKVG.

This sequence belongs to the AccA family. Acetyl-CoA carboxylase is a heterohexamer composed of biotin carboxyl carrier protein, biotin carboxylase and two subunits each of ACCase subunit alpha and ACCase plastid-coded subunit beta (accD).

It localises to the plastid. It is found in the chloroplast inner membrane. The enzyme catalyses N(6)-carboxybiotinyl-L-lysyl-[protein] + acetyl-CoA = N(6)-biotinyl-L-lysyl-[protein] + malonyl-CoA. The protein operates within lipid metabolism; malonyl-CoA biosynthesis; malonyl-CoA from acetyl-CoA: step 1/1. Its activity is regulated as follows. Activated by reductants such as dithiothreitol (DTT), and by thioredoxin in vivo, following exposure to light. Functionally, component of the acetyl coenzyme A carboxylase (ACC) complex. First, biotin carboxylase catalyzes the carboxylation of biotin on its carrier protein (BCCP) and then the CO(2) group is transferred by the carboxyltransferase to acetyl-CoA to form malonyl-CoA. The protein is Acetyl-coenzyme A carboxylase carboxyl transferase subunit alpha, chloroplastic (ACCA) of Pisum sativum (Garden pea).